Here is a 404-residue protein sequence, read N- to C-terminus: uncharacterized protein (404 aa).

Transmembrane regions (helical) follow at residues 1–21 (MNVL…FLFS), 32–52 (VIVG…WEAG), 89–109 (AFAL…AVLY), 182–202 (LFGY…SFMA), 261–281 (LAFV…FGLF), 285–305 (GVTL…LIGV), 344–364 (ATII…AIML), and 384–404 (KAVL…GMFI).

Belongs to the concentrative nucleoside transporter (CNT) (TC 2.A.41) family.

It localises to the cell membrane. This is an uncharacterized protein from Bacillus subtilis (strain 168).